We begin with the raw amino-acid sequence, 362 residues long: uncharacterized protein (362 aa).

The next 7 helical transmembrane spans lie at 32 to 52, 75 to 95, 106 to 126, 148 to 168, 176 to 196, 287 to 307, and 329 to 349; these read GAGW…VGAV, FVDA…ADGV, VVML…DLSV, AAVG…GVGA, GVGT…VVVV, VFAL…PVAM, and VLVA…CGMF.

Belongs to the peptidase S58 family.

Its subcellular location is the cell membrane. Aminopeptidase. This is an uncharacterized protein from Mycobacterium leprae (strain TN).